A 305-amino-acid chain; its full sequence is Mitochondrial thiamine pyrophosphate carrier 1 (305 aa).

Transmembrane regions (helical) follow at residues valine 16–alanine 32, isoleucine 84–isoleucine 100, leucine 122–leucine 142, glycine 169–tryptophan 193, isoleucine 213–leucine 229, and glycine 270–phenylalanine 287. Solcar repeat units lie at residues valine 16 to tryptophan 103, proline 116 to threonine 201, and aspartate 206 to alanine 295.

The protein belongs to the mitochondrial carrier (TC 2.A.29) family.

It localises to the mitochondrion inner membrane. In terms of biological role, mitochondrial transporter that mediates uptake of thiamine pyrophosphate (ThPP) into mitochondria. This chain is Mitochondrial thiamine pyrophosphate carrier 1 (TPC1), found in Scheffersomyces stipitis (strain ATCC 58785 / CBS 6054 / NBRC 10063 / NRRL Y-11545) (Yeast).